A 297-amino-acid chain; its full sequence is Polyketide transferase ATR5 (297 aa).

Residues 49–272 (DVAVWFQKRG…FVLAENKGHM (224 aa)) are abhydrolase domain.

The protein belongs to the polyketide transferase af380 family.

It functions in the pathway mycotoxin biosynthesis. Polyketide transferase; part of the core atranone cluster (CAC) which products are predicted to catalyze most or all steps of atranone synthesis, starting from geranylgeranyl pyrophosphate (GGPP). The initial cyclization of GGPP to dolabellane is probably performed by the terpene cyclase ATR13. The Baeyer-Villiger oxidation near the end of the atranone synthesis, which converts atranones D and E to atranones F and G is predicted to be catalyzed by the monooxygenase ATR8. Of the CAC's other predicted gene products, the reducing PKS ATR6 might synthesize a polyketide chain. This polyketide is probably transferred onto the atranone backbone by the polyketide transferase ATR5. Other predicted CAC products include 4 oxygenases (ATR2, ATR3, ATR4, and ATR14), 3 short-chain reductases (ATR7, ATR9, and ATR10), and a methyltransferase (ATR12). These may all be involved in the various steps of atranone biosynthesis, although their specific roles must await experimental determination. The protein is Polyketide transferase ATR5 of Stachybotrys chlorohalonatus (strain IBT 40285).